Consider the following 295-residue polypeptide: Transcriptional regulator SirC (295 aa).

In terms of domain architecture, HTH araC/xylS-type spans 195 to 292 (EKVYNIIISD…KITPLSFMRT (98 aa)). 2 consecutive DNA-binding regions (H-T-H motif) follow at residues 212–233 (AEVAGKLFMSVSSLKRKLAAEE) and 259–282 (ISQVATMCGYDTPSYFIAIFKRHF).

In terms of biological role, positive regulator of the expression of the invasion-associated type III secretion system encoded within SPI-1 (pathogenicity island 1). In Salmonella typhi, this protein is Transcriptional regulator SirC (sirC).